The sequence spans 450 residues: Phosphoglucosamine mutase (450 aa).

Residue Ser-101 is the Phosphoserine intermediate of the active site. Residues Ser-101, Asp-241, Asp-243, and Asp-245 each contribute to the Mg(2+) site. Residue Ser-101 is modified to Phosphoserine.

Belongs to the phosphohexose mutase family. Mg(2+) serves as cofactor. Post-translationally, activated by phosphorylation.

It carries out the reaction alpha-D-glucosamine 1-phosphate = D-glucosamine 6-phosphate. Functionally, catalyzes the conversion of glucosamine-6-phosphate to glucosamine-1-phosphate. The protein is Phosphoglucosamine mutase of Ligilactobacillus salivarius (strain UCC118) (Lactobacillus salivarius).